Here is a 267-residue protein sequence, read N- to C-terminus: 4-hydroxy-tetrahydrodipicolinate reductase (267 aa).

NAD(+) is bound by residues 9-14 (GVSGRM) and Asp35. An NADP(+)-binding site is contributed by Arg36. NAD(+) contacts are provided by residues 98–100 (GTT) and 122–125 (APNM). His155 functions as the Proton donor/acceptor in the catalytic mechanism. Position 156 (His156) interacts with (S)-2,3,4,5-tetrahydrodipicolinate. Catalysis depends on Lys159, which acts as the Proton donor. (S)-2,3,4,5-tetrahydrodipicolinate is bound at residue 165-166 (GT).

The protein belongs to the DapB family.

It localises to the cytoplasm. It catalyses the reaction (S)-2,3,4,5-tetrahydrodipicolinate + NAD(+) + H2O = (2S,4S)-4-hydroxy-2,3,4,5-tetrahydrodipicolinate + NADH + H(+). The enzyme catalyses (S)-2,3,4,5-tetrahydrodipicolinate + NADP(+) + H2O = (2S,4S)-4-hydroxy-2,3,4,5-tetrahydrodipicolinate + NADPH + H(+). The protein operates within amino-acid biosynthesis; L-lysine biosynthesis via DAP pathway; (S)-tetrahydrodipicolinate from L-aspartate: step 4/4. Catalyzes the conversion of 4-hydroxy-tetrahydrodipicolinate (HTPA) to tetrahydrodipicolinate. This Thiobacillus denitrificans (strain ATCC 25259 / T1) protein is 4-hydroxy-tetrahydrodipicolinate reductase.